Consider the following 491-residue polypeptide: UDP-N-acetylmuramate--L-alanine ligase (491 aa).

126-132 (GTHGKTT) provides a ligand contact to ATP.

The protein belongs to the MurCDEF family.

The protein localises to the cytoplasm. It catalyses the reaction UDP-N-acetyl-alpha-D-muramate + L-alanine + ATP = UDP-N-acetyl-alpha-D-muramoyl-L-alanine + ADP + phosphate + H(+). It functions in the pathway cell wall biogenesis; peptidoglycan biosynthesis. In terms of biological role, cell wall formation. In Shigella boydii serotype 18 (strain CDC 3083-94 / BS512), this protein is UDP-N-acetylmuramate--L-alanine ligase.